The chain runs to 515 residues: 2,3-bisphosphoglycerate-independent phosphoglycerate mutase (515 aa).

Mn(2+) contacts are provided by aspartate 14 and serine 63. The active site involves serine 63. Residues histidine 124, 154–155 (RD), arginine 186, arginine 192, 259–262 (RADR), and lysine 334 contribute to the substrate site. 5 residues coordinate Mn(2+): aspartate 401, histidine 405, aspartate 442, histidine 443, and histidine 460.

The protein belongs to the BPG-independent phosphoglycerate mutase family. Mg(2+) is required as a cofactor. It depends on Mn(2+) as a cofactor.

It catalyses the reaction (2R)-2-phosphoglycerate = (2R)-3-phosphoglycerate. It participates in carbohydrate degradation; glycolysis; pyruvate from D-glyceraldehyde 3-phosphate: step 3/5. With respect to regulation, activity is not affected by 2,3-bisphosphoglycerate. In terms of biological role, catalyzes the interconversion of 2-phosphoglycerate and 3-phosphoglycerate. The sequence is that of 2,3-bisphosphoglycerate-independent phosphoglycerate mutase from Brugia malayi (Filarial nematode worm).